A 398-amino-acid chain; its full sequence is Glucose-1-phosphate adenylyltransferase (398 aa).

Residues Y100, G165, 180-181 (EK), and S191 contribute to the alpha-D-glucose 1-phosphate site.

Belongs to the bacterial/plant glucose-1-phosphate adenylyltransferase family. As to quaternary structure, homotetramer.

It catalyses the reaction alpha-D-glucose 1-phosphate + ATP + H(+) = ADP-alpha-D-glucose + diphosphate. The protein operates within glycan biosynthesis; glycogen biosynthesis. Functionally, involved in the biosynthesis of ADP-glucose, a building block required for the elongation reactions to produce glycogen. Catalyzes the reaction between ATP and alpha-D-glucose 1-phosphate (G1P) to produce pyrophosphate and ADP-Glc. This Desulfitobacterium hafniense (strain DSM 10664 / DCB-2) protein is Glucose-1-phosphate adenylyltransferase.